Reading from the N-terminus, the 147-residue chain is DNA polymerase epsilon subunit 3 (147 aa).

N-acetylalanine is present on Ala-2. Thr-83 is subject to Phosphothreonine. The stretch at 85 to 146 forms a coiled coil; the sequence is LKEALEAYRR…EEQNEEEEVD (62 aa). Residues 93-124 are compositionally biased toward basic and acidic residues; the sequence is RREQKGKKEASEQKKKDKDKKTDSEEQDKSRD. Positions 93-147 are disordered; the sequence is RREQKGKKEASEQKKKDKDKKTDSEEQDKSRDEDNDEDEERLEEEEQNEEEEVDN. Phosphoserine is present on Ser-122. Over residues 125-147 the composition is skewed to acidic residues; sequence EDNDEDEERLEEEEQNEEEEVDN.

In terms of assembly, component of the DNA polymerase epsilon complex consisting of four subunits: the catalytic subunit POLE and the accessory subunits POLE2, POLE3 and POLE4. Interaction with POLE4 is a prerequisite for further binding with POLE and POLE2. Heterodimer with CHRAC1; binds to DNA. Component of the CHRAC ISWI chromatin remodeling complex at least composed of SMARCA5/SNF2H, BAZ1A/ACF1, CHRAC1 and POLE3; the complex preferentially binds DNA through the CHRAC1-POLE3 heterodimer and possesses ATP-dependent nucleosome-remodeling activity. Within the complex, the heterodimer with CHRAC1 interacts with SMARCA5/SNF2H; the interaction is direct and enhances nucleosome sliding activity by the SMARCA5/SNF2H and BAZ1A/ACF1 interaction. Within the complex, the heterodimer with CHRAC1 interacts with BAZ1A/ACF1; the interactions are direct.

It localises to the nucleus. Its function is as follows. Accessory component of the DNA polymerase epsilon complex. Participates in DNA repair and in chromosomal DNA replication. Forms a complex with CHRAC1 and binds naked DNA, which is then incorporated into chromatin, aided by the nucleosome-remodeling activity of ISWI/SNF2H and ACF1. Does not enhance nucleosome sliding activity of the ACF-5 ISWI chromatin remodeling complex. In Bos taurus (Bovine), this protein is DNA polymerase epsilon subunit 3 (POLE3).